Here is a 502-residue protein sequence, read N- to C-terminus: Probable cytosol aminopeptidase (502 aa).

Residues K267 and D272 each contribute to the Mn(2+) site. The active site involves K279. The Mn(2+) site is built by D290, D349, and E351. Residue R353 is part of the active site.

Belongs to the peptidase M17 family. The cofactor is Mn(2+).

Its subcellular location is the cytoplasm. It carries out the reaction Release of an N-terminal amino acid, Xaa-|-Yaa-, in which Xaa is preferably Leu, but may be other amino acids including Pro although not Arg or Lys, and Yaa may be Pro. Amino acid amides and methyl esters are also readily hydrolyzed, but rates on arylamides are exceedingly low.. The catalysed reaction is Release of an N-terminal amino acid, preferentially leucine, but not glutamic or aspartic acids.. Its function is as follows. Presumably involved in the processing and regular turnover of intracellular proteins. Catalyzes the removal of unsubstituted N-terminal amino acids from various peptides. The chain is Probable cytosol aminopeptidase from Aeromonas salmonicida (strain A449).